The chain runs to 38 residues: Small ribosomal subunit protein uS12c (38 aa).

The segment at 1–26 (MPTIQQLIRNARQPIENRKKSPALRG) is disordered.

It belongs to the universal ribosomal protein uS12 family. Part of the 30S ribosomal subunit.

It localises to the plastid. It is found in the chloroplast. With S4 and S5 plays an important role in translational accuracy. Located at the interface of the 30S and 50S subunits. The polypeptide is Small ribosomal subunit protein uS12c (rps12) (Pinus contorta (Shore pine)).